A 191-amino-acid chain; its full sequence is Peptidyl-tRNA hydrolase (191 aa).

Tyr-17 lines the tRNA pocket. His-22 acts as the Proton acceptor in catalysis. 3 residues coordinate tRNA: Tyr-68, Asn-70, and Asn-116.

The protein belongs to the PTH family. As to quaternary structure, monomer.

It localises to the cytoplasm. The catalysed reaction is an N-acyl-L-alpha-aminoacyl-tRNA + H2O = an N-acyl-L-amino acid + a tRNA + H(+). Hydrolyzes ribosome-free peptidyl-tRNAs (with 1 or more amino acids incorporated), which drop off the ribosome during protein synthesis, or as a result of ribosome stalling. Functionally, catalyzes the release of premature peptidyl moieties from peptidyl-tRNA molecules trapped in stalled 50S ribosomal subunits, and thus maintains levels of free tRNAs and 50S ribosomes. The polypeptide is Peptidyl-tRNA hydrolase (Mycobacterium ulcerans (strain Agy99)).